A 108-amino-acid chain; its full sequence is Latartoxin-2c (108 aa).

The signal sequence occupies residues 1 to 19 (MKVLVITALCFILLQNVLG). Positions 20–42 (EDTYEDLQNYIENLINENQDEAR) are cleaved as a propeptide — removed in mature form. A Processing quadruplet motif motif is present at residues 39–42 (DEAR). Cystine bridges form between Cys44/Cys61, Cys51/Cys72, Cys60/Cys84, and Cys74/Cys82. Ile107 is subject to Isoleucine amide.

It belongs to the neurotoxin 19 (CSTX) family. 11 (latartoxin) subfamily. Contains 4 disulfide bonds. Post-translationally, cleavage of the propeptide depends on the processing quadruplet motif (XXXR, with at least one of X being E). As to expression, expressed by the venom gland.

It is found in the secreted. Its function is as follows. Insect toxin. In Lachesana tarabaevi (Spider), this protein is Latartoxin-2c.